The following is a 359-amino-acid chain: 3-dehydroquinate synthase (359 aa).

NAD(+) contacts are provided by residues 70–75 (DGEQYK), 105–109 (GVIGD), 129–130 (TT), lysine 142, lysine 151, and 169–172 (FYKT). Positions 184, 247, and 264 each coordinate Zn(2+).

The protein belongs to the sugar phosphate cyclases superfamily. Dehydroquinate synthase family. It depends on Co(2+) as a cofactor. Requires Zn(2+) as cofactor. The cofactor is NAD(+).

The protein localises to the cytoplasm. The catalysed reaction is 7-phospho-2-dehydro-3-deoxy-D-arabino-heptonate = 3-dehydroquinate + phosphate. It participates in metabolic intermediate biosynthesis; chorismate biosynthesis; chorismate from D-erythrose 4-phosphate and phosphoenolpyruvate: step 2/7. Functionally, catalyzes the conversion of 3-deoxy-D-arabino-heptulosonate 7-phosphate (DAHP) to dehydroquinate (DHQ). The protein is 3-dehydroquinate synthase of Francisella tularensis subsp. holarctica (strain OSU18).